A 128-amino-acid polypeptide reads, in one-letter code: Protein BEX2 (128 aa).

R50 is modified (omega-N-methylarginine). A disordered region spans residues 107 to 128 (SLRAVSTDPPHHDHHDEFCLMP). Positions 115 to 128 (PPHHDHHDEFCLMP) are enriched in basic and acidic residues. The tract at residues 117–121 (HHDHH) is his cluster. Residue C125 participates in Zn(2+) binding.

This sequence belongs to the BEX family. In terms of assembly, interacts with LMO2, possibly leading to regulate the transcriptional activity of a DNA-binding complex containing LMO2. Interacts with OMP. Expressed in central nervous system, with high level in pituitary, cerebellum and temporal lobe. Widely expressed in breast cancer cell lines.

It is found in the cytoplasm. The protein localises to the nucleus. Its function is as follows. Regulator of mitochondrial apoptosis and G1 cell cycle in breast cancer. Protects the breast cancer cells against mitochondrial apoptosis and this effect is mediated through the modulation of BCL2 protein family, which involves the positive regulation of anti-apoptotic member BCL2 and the negative regulation of pro-apoptotic members BAD, BAK1 and PUMA. Required for the normal cell cycle progression during G1 in breast cancer cells through the regulation of CCND1 and CDKN1A. Regulates the level of PP2A regulatory subunit B and PP2A phosphatase activity. In absence of reductive stress, acts as a pseudosubstrate for the CRL2(FEM1B) complex: associates with FEM1B via zinc, thereby preventing association between FEM1B and its substrates. This is Protein BEX2 (BEX2) from Homo sapiens (Human).